A 410-amino-acid chain; its full sequence is PHAF1 protein At3g51130 (410 aa).

This sequence belongs to the PHAF1 family.

The polypeptide is PHAF1 protein At3g51130 (Arabidopsis thaliana (Mouse-ear cress)).